We begin with the raw amino-acid sequence, 108 residues long: Large ribosomal subunit protein uL24 (108 aa).

It belongs to the universal ribosomal protein uL24 family. Part of the 50S ribosomal subunit.

Its function is as follows. One of two assembly initiator proteins, it binds directly to the 5'-end of the 23S rRNA, where it nucleates assembly of the 50S subunit. In terms of biological role, one of the proteins that surrounds the polypeptide exit tunnel on the outside of the subunit. The chain is Large ribosomal subunit protein uL24 from Citrifermentans bemidjiense (strain ATCC BAA-1014 / DSM 16622 / JCM 12645 / Bem) (Geobacter bemidjiensis).